We begin with the raw amino-acid sequence, 79 residues long: Schistosomin (79 aa).

Post-translationally, contains four disulfide bonds. Growth-controlling neurosecretory light green cells, in the cerebral ganglia of the CNS.

It is found in the secreted. Its function is as follows. Anti-gonadotropic neuropeptide. It also decreases the binding capacity of calfluxin to membrane-bound receptors of the albumen gland. This leads to inhibition of the reproductive activities of the infected snail. In Lymnaea stagnalis (Great pond snail), this protein is Schistosomin.